A 1293-amino-acid chain; its full sequence is Phosphoribosylformylglycinamidine synthase (1293 aa).

Residues 305–316 and A676 contribute to the ATP site; that span reads GAATGSGGEIRD. Residues 305-327 form a disordered region; that stretch reads GAATGSGGEIRDEGATGRGSKPK. Mg(2+) contacts are provided by D677, E716, N720, and D884. S886 contributes to the ATP binding site. The 254-residue stretch at 1040 to 1293 folds into the Glutamine amidotransferase type-1 domain; the sequence is MAILREQGVN…MFRNARVNLG (254 aa). Residue C1133 is the Nucleophile of the active site. Active-site residues include H1258 and E1260.

The protein in the N-terminal section; belongs to the FGAMS family. As to quaternary structure, monomer.

It localises to the cytoplasm. It catalyses the reaction N(2)-formyl-N(1)-(5-phospho-beta-D-ribosyl)glycinamide + L-glutamine + ATP + H2O = 2-formamido-N(1)-(5-O-phospho-beta-D-ribosyl)acetamidine + L-glutamate + ADP + phosphate + H(+). It functions in the pathway purine metabolism; IMP biosynthesis via de novo pathway; 5-amino-1-(5-phospho-D-ribosyl)imidazole from N(2)-formyl-N(1)-(5-phospho-D-ribosyl)glycinamide: step 1/2. Its function is as follows. Phosphoribosylformylglycinamidine synthase involved in the purines biosynthetic pathway. Catalyzes the ATP-dependent conversion of formylglycinamide ribonucleotide (FGAR) and glutamine to yield formylglycinamidine ribonucleotide (FGAM) and glutamate. The polypeptide is Phosphoribosylformylglycinamidine synthase (Shewanella sp. (strain MR-4)).